The sequence spans 316 residues: Olfactory receptor 1N2 (316 aa).

The Extracellular segment spans residues 1 to 28 (MGKPGRVNQTTVSDFLLLGLSEWPEEQP). The N-linked (GlcNAc...) asparagine glycan is linked to Asn-8. Residues 29-49 (LLFGIFLGMYLVTMVGNLLII) form a helical membrane-spanning segment. Residues 50 to 60 (LAISSDPHLHT) are Cytoplasmic-facing. The chain crosses the membrane as a helical span at residues 61 to 81 (PMYFFLANLSLTDACFTSASI). Residues 82–100 (PKMLANIHTQSQIISYSGC) lie on the Extracellular side of the membrane. Cys-100 and Cys-182 are oxidised to a cystine. Residues 101-121 (LAQLYFLLMFGGLDNCLLAVM) form a helical membrane-spanning segment. The Cytoplasmic portion of the chain corresponds to 122-145 (AYDRYVAICQPLHYSTSMSPQLCA). The helical transmembrane segment at 146 to 166 (LMLGVCWVLTNCPALMHTLLL) threads the bilayer. Topologically, residues 167 to 199 (TRVAFCAQKAIPHFYCDPSALLKLACSDTHVNE) are extracellular. The chain crosses the membrane as a helical span at residues 200–220 (LMIITMGLLFLTVPLLLIVFS). The Cytoplasmic segment spans residues 221-243 (YVRIFWAVFVISSPGGRWKAFST). A helical transmembrane segment spans residues 244–264 (CGSHLTVVLLFYGSLMGVYLL). Topologically, residues 265–274 (PPSTYSTERE) are extracellular. A helical membrane pass occupies residues 275-295 (SRAAVLYMVIIPTLNPFIYSL). Topologically, residues 296–316 (RNRDMKEALGKLFVSGKTFFL) are cytoplasmic.

This sequence belongs to the G-protein coupled receptor 1 family.

Its subcellular location is the membrane. Its function is as follows. Odorant receptor. This Homo sapiens (Human) protein is Olfactory receptor 1N2 (OR1N2).